A 214-amino-acid polypeptide reads, in one-letter code: Dephospho-CoA kinase (214 aa).

The DPCK domain occupies 4–204 (IVGLTGGIGS…QRYLQLAQQK (201 aa)). 12–17 (GSGKST) contacts ATP.

The protein belongs to the CoaE family.

The protein localises to the cytoplasm. It catalyses the reaction 3'-dephospho-CoA + ATP = ADP + CoA + H(+). Its pathway is cofactor biosynthesis; coenzyme A biosynthesis; CoA from (R)-pantothenate: step 5/5. Functionally, catalyzes the phosphorylation of the 3'-hydroxyl group of dephosphocoenzyme A to form coenzyme A. This Mannheimia succiniciproducens (strain KCTC 0769BP / MBEL55E) protein is Dephospho-CoA kinase.